Here is a 163-residue protein sequence, read N- to C-terminus: uncharacterized protein (163 aa).

The next 4 helical transmembrane spans lie at 19–39 (GPPSVICIRLLVGLVFLSEGI), 63–83 (FFADLDGVVEIVCGTLVLLGL), 87–107 (VAAVPLLIDMVGAIVLTKLRA), and 119–139 (FWGMAHAARTDLSMLLGLIFL).

It belongs to the DoxX family.

The protein resides in the cell membrane. This is an uncharacterized protein from Mycobacterium tuberculosis (strain ATCC 25618 / H37Rv).